Here is a 317-residue protein sequence, read N- to C-terminus: Metaxin-1 (317 aa).

Glycyl lysine isopeptide (Lys-Gly) (interchain with G-Cter in ubiquitin) cross-links involve residues Lys-38, Lys-41, and Lys-78. Residues 164-184 (EELEKELYQEARECLTLLSQR) form a helical membrane-spanning segment.

Belongs to the metaxin family. As to quaternary structure, interacts with MTX2/metaxin-2. Associates with the mitochondrial contact site and cristae organizing system (MICOS) complex, composed of at least MICOS10/MIC10, CHCHD3/MIC19, CHCHD6/MIC25, APOOL/MIC27, IMMT/MIC60, APOO/MIC23/MIC26 and QIL1/MIC13. This complex was also known under the names MINOS or MitOS complex. The MICOS complex associates with mitochondrial outer membrane proteins SAMM50, MTX1 and MTX2 (together described as components of the mitochondrial outer membrane sorting assembly machinery (SAM) complex) and DNAJC11, mitochondrial inner membrane protein TMEM11 and with HSPA9. The MICOS and SAM complexes together with DNAJC11 are part of a large protein complex spanning both membranes termed the mitochondrial intermembrane space bridging (MIB) complex. Interacts with ARMC1. In terms of processing, ubiquitinated by PRKN during mitophagy, leading to its degradation and enhancement of mitophagy. Deubiquitinated by USP30.

It is found in the mitochondrion outer membrane. Involved in transport of proteins into the mitochondrion. Essential for embryonic development. In Sus scrofa (Pig), this protein is Metaxin-1 (MTX1).